A 669-amino-acid polypeptide reads, in one-letter code: Beta-galactosidase (669 aa).

The first 24 residues, 1-24 (MDFPGAARLLSLLLVPLLLGPARG), serve as a signal peptide directing secretion. Residues 25 to 29 (LRNAS) constitute a propeptide that is removed on maturation. N-linked (GlcNAc...) asparagine glycosylation occurs at Asn27. 3 residues coordinate substrate: Tyr84, Glu130, and Asn188. Glu189 serves as the catalytic Proton donor. Cys196 and Cys231 are joined by a disulfide. A glycan (N-linked (GlcNAc...) asparagine) is linked at Asn248. Glu269 serves as the catalytic Nucleophile. Tyr334 lines the substrate pocket. Asn465, Asn499, Asn547, and Asn557 each carry an N-linked (GlcNAc...) asparagine glycan. Cys628 and Cys636 are oxidised to a cystine. A disordered region spans residues 649-669 (TPTSSHPLPDLSDRDSGWDRV). A compositionally biased stretch (basic and acidic residues) spans 659–669 (LSDRDSGWDRV).

The protein belongs to the glycosyl hydrolase 35 family. Homodimer. May form higher multimers.

Its subcellular location is the lysosome. The catalysed reaction is Hydrolysis of terminal non-reducing beta-D-galactose residues in beta-D-galactosides.. Functionally, cleaves beta-linked terminal galactosyl residues from gangliosides, glycoproteins, and glycosaminoglycans. The sequence is that of Beta-galactosidase (GLB1) from Felis catus (Cat).